Reading from the N-terminus, the 231-residue chain is Probable transaldolase (231 aa).

Residue lysine 83 is the Schiff-base intermediate with substrate of the active site.

This sequence belongs to the transaldolase family. Type 3B subfamily.

Its subcellular location is the cytoplasm. It catalyses the reaction D-sedoheptulose 7-phosphate + D-glyceraldehyde 3-phosphate = D-erythrose 4-phosphate + beta-D-fructose 6-phosphate. It participates in carbohydrate degradation; pentose phosphate pathway; D-glyceraldehyde 3-phosphate and beta-D-fructose 6-phosphate from D-ribose 5-phosphate and D-xylulose 5-phosphate (non-oxidative stage): step 2/3. In terms of biological role, transaldolase is important for the balance of metabolites in the pentose-phosphate pathway. The sequence is that of Probable transaldolase from Rhodospirillum centenum (strain ATCC 51521 / SW).